Consider the following 562-residue polypeptide: Protein wntless (562 aa).

Over 1 to 13 the chain is Cytoplasmic; the sequence is MSGTILENLSGRK. The chain crosses the membrane as a helical span at residues 14-34; it reads LSILVASLLLCQVFCFLLGGL. Topologically, residues 35–239 are lumenal; it reads YAPLPAGHVT…AIHQNGGFTQ (205 aa). Asparagine 58 carries N-linked (GlcNAc...) asparagine glycosylation. The chain crosses the membrane as a helical span at residues 240 to 260; sequence IWLMLKTVLFPFVVGIMIWFW. Topologically, residues 261–270 are cytoplasmic; that stretch reads RRVHLLQRSP. Residues 271–291 traverse the membrane as a helical segment; it reads ALLEYMLIYLGGALTFLNLPL. The Lumenal portion of the chain corresponds to 292 to 311; the sequence is EYLSLVVEMPYMLLLSDIRQ. Residues 312–332 traverse the membrane as a helical segment; that stretch reads GIFYAMLLSFWLVFAGEHMLI. Topologically, residues 333–344 are cytoplasmic; the sequence is QDAPNKSTIRSR. Residues 345-365 traverse the membrane as a helical segment; it reads YWKHLSAVVVGCISLFVFDIC. Residues 366-390 are Lumenal-facing; the sequence is ERGVQLRNPFYSIWTTPLGAKVAMT. A helical transmembrane segment spans residues 391 to 411; it reads FIILAGVSAAIYFLFLCYMIW. Residues 412-441 are Cytoplasmic-facing; sequence KVFRNIGDKRTSLPSMSQARRLHYEGLIYR. Residues 442-462 traverse the membrane as a helical segment; that stretch reads FKFLMLATLLCAALTVAGFIM. Residues 463-482 are Lumenal-facing; that stretch reads GQMAEGQWQWNDNVEIQLTS. Residues 483–503 form a helical membrane-spanning segment; the sequence is AFLTGVYGMWNIYIFALLILY. Residues 504 to 562 are Cytoplasmic-facing; sequence APSHKQWPTMHHSDETTQSNENIVASAASEEIEFSHLPSDSNPSEISSLTSFTRKVAFD. A disordered region spans residues 539-562; sequence HLPSDSNPSEISSLTSFTRKVAFD. A compositionally biased stretch (polar residues) spans 541-556; that stretch reads PSDSNPSEISSLTSFT.

It belongs to the wntless family. In terms of assembly, interacts with wg; in the Golgi. Interacts with Vps35, a component of the retromer complex; wls stability is regulated by Vps35.

Its subcellular location is the presynaptic cell membrane. The protein resides in the postsynaptic cell membrane. It localises to the cell membrane. It is found in the endoplasmic reticulum membrane. The protein localises to the endosome membrane. Its subcellular location is the golgi apparatus membrane. Its function is as follows. A segment polarity gene required for wingless (wg)-dependent patterning processes, acting in both wg-sending cells and wg-target cells. In non-neuronal cells wls directs wg secretion. The wls traffic loop encompasses the Golgi, the cell surface, an endocytic compartment and a retrograde route leading back to the Golgi, and involves clathrin-mediated endocytosis and the retromer complex (a conserved protein complex consisting of Vps35 and Vps26). In neuronal cells (the larval motorneuron NMJ), the wg signal moves across the synapse via the release of wls-containing exosome-like vesicles. Postsynaptic wls is required for the trafficking of fz2 through the fz2-interacting protein Grip. This is Protein wntless from Drosophila ananassae (Fruit fly).